A 221-amino-acid chain; its full sequence is Thiopurine S-methyltransferase (221 aa).

The S-adenosyl-L-methionine site is built by W12, L47, E68, and R125.

It belongs to the class I-like SAM-binding methyltransferase superfamily. TPMT family.

Its subcellular location is the cytoplasm. It carries out the reaction S-adenosyl-L-methionine + a thiopurine = S-adenosyl-L-homocysteine + a thiopurine S-methylether.. In Legionella pneumophila subsp. pneumophila (strain Philadelphia 1 / ATCC 33152 / DSM 7513), this protein is Thiopurine S-methyltransferase.